Reading from the N-terminus, the 169-residue chain is Protein YABBY 7 (169 aa).

A C4-type zinc finger spans residues 21–48 (CSFCATVLLVSVPCSSVLRVVAVQCGHC). The disordered stretch occupies residues 63–122 (SASIELTPQELDAGPPPGEYSDESSGDDREGRDAEDDAPAPAAAAVANKPPGRKQRTPSA).

It belongs to the YABBY family. In terms of tissue distribution, expressed in leaf sheaths and flowers.

The protein resides in the nucleus. The chain is Protein YABBY 7 (YAB7) from Oryza sativa subsp. japonica (Rice).